Here is a 920-residue protein sequence, read N- to C-terminus: Plasma membrane ATPase (920 aa).

Over residues 1–11 (MSDERITEKPP) the composition is skewed to basic and acidic residues. Positions 1–71 (MSDERITEKP…AEEDDGPAAA (71 aa)) are disordered. At 1–117 (MSDERITEKP…REESENLLVK (117 aa)) the chain is on the cytoplasmic side. Residues 17–50 (SEGEPVPEEEVEEETEEEVPDEQSSEDDDIDGLI) show a composition bias toward acidic residues. Residues 118–138 (FLMFFIGPIQFVMEAAAVLAA) form a helical membrane-spanning segment. At 139–142 (GLED) the chain is on the extracellular side. Residues 143-162 (WVDFGVICGLLFLNAGVGFI) form a helical membrane-spanning segment. Topologically, residues 163–293 (QEFQAGSIVE…GQGHFTEVLN (131 aa)) are cytoplasmic. The chain crosses the membrane as a helical span at residues 294–315 (GIGVILLVLVVITLLLIWTACF). The Extracellular segment spans residues 316-326 (YRTVRIVPILR). A helical membrane pass occupies residues 327 to 349 (YTLGITIVGVPVGLPAVVTTTMA). The Cytoplasmic portion of the chain corresponds to 350–721 (GGAAYLAKKQ…IAILNHSLDI (372 aa)). Asp380 acts as the 4-aspartylphosphate intermediate in catalysis. Positions 636 and 640 each coordinate Mg(2+). The helical transmembrane segment at 722–740 (DLIVFIAIFADVATLAIAY) threads the bilayer. The Extracellular portion of the chain corresponds to 741 to 756 (DNAPFSPSPVKWNLPR). The helical transmembrane segment at 757–776 (LWGMSIMMGIILAAGTWITL) threads the bilayer. The Cytoplasmic segment spans residues 777–826 (TTMFLPKGGIIQNFGSIDGILFLEISLTENWLIFITRAVGPFWSSIPSWQ). A helical membrane pass occupies residues 827-847 (LAGAVFVVDVVATMFTLFGWW). The Extracellular segment spans residues 848–859 (SQNWTDIVTVVR). Residues 860–876 (IYIWSIGIFCCLGGAYY) traverse the membrane as a helical segment. Over 877–920 (LMSESETFDRLMNGKPLKENKSTRSVEDFLASMRRVSTQHEKGN) the chain is Cytoplasmic.

It belongs to the cation transport ATPase (P-type) (TC 3.A.3) family. Type IIIA subfamily.

Its subcellular location is the cell membrane. The enzyme catalyses ATP + H2O + H(+)(in) = ADP + phosphate + 2 H(+)(out). In terms of biological role, the plasma membrane ATPase of plants and fungi is a hydrogen ion pump. The proton gradient it generates drives the active transport of nutrients by H(+)-symport. The resulting external acidification and/or internal alkinization may mediate growth responses. In Zygosaccharomyces rouxii, this protein is Plasma membrane ATPase.